A 96-amino-acid chain; its full sequence is Protein RnfH (96 aa).

The protein belongs to the UPF0125 (RnfH) family.

In Hahella chejuensis (strain KCTC 2396), this protein is Protein RnfH.